Reading from the N-terminus, the 278-residue chain is Non-homologous end joining protein Ku (278 aa).

The Ku domain maps to 9–172; sequence ISFGLVNIPV…MHFAQELVDV (164 aa). The tract at residues 255–278 is disordered; it reads NQTGAGAKKKPAKTAKRGKSRKAA. Over residues 261-278 the composition is skewed to basic residues; that stretch reads AKKKPAKTAKRGKSRKAA.

This sequence belongs to the prokaryotic Ku family. As to quaternary structure, homodimer. Interacts with LigD.

In terms of biological role, with LigD forms a non-homologous end joining (NHEJ) DNA repair enzyme, which repairs dsDNA breaks with reduced fidelity. Binds linear dsDNA with 5'- and 3'- overhangs but not closed circular dsDNA nor ssDNA. Recruits and stimulates the ligase activity of LigD. The chain is Non-homologous end joining protein Ku from Opitutus terrae (strain DSM 11246 / JCM 15787 / PB90-1).